The following is a 241-amino-acid chain: Interleukin-6 (241 aa).

The interval 1–25 (MNFTEGCEATGRRPGSAGSRRRRAP) is disordered. The signal sequence occupies residues 1-46 (MNFTEGCEATGRRPGSAGSRRRRAPRPGPVALLPLLLPLLLPPAAA). A disulfide bridge links Cys-122 with Cys-132.

Belongs to the IL-6 superfamily. Component of a hexamer of two molecules each of IL6, IL6R and IL6ST; first binds to IL6R to associate with the signaling subunit IL6ST.

Its subcellular location is the secreted. Its function is as follows. Cytokine with a wide variety of biological functions in immunity, tissue regeneration, and metabolism. Binds to IL6R, then the complex associates to the signaling subunit IL6ST/gp130 to trigger the intracellular IL6-signaling pathway. The interaction with the membrane-bound IL6R and IL6ST stimulates 'classic signaling', whereas the binding of IL6 and soluble IL6R to IL6ST stimulates 'trans-signaling'. Alternatively, 'cluster signaling' occurs when membrane-bound IL6:IL6R complexes on transmitter cells activate IL6ST receptors on neighboring receiver cells. The sequence is that of Interleukin-6 (IL6) from Gallus gallus (Chicken).